The sequence spans 94 residues: Large ribosomal subunit protein bL27 (94 aa).

Residues 1–10 (MQFLFNIQLF) constitute a propeptide that is removed on maturation.

This sequence belongs to the bacterial ribosomal protein bL27 family. Post-translationally, the N-terminus is cleaved by ribosomal processing cysteine protease Prp.

In Fusobacterium nucleatum subsp. nucleatum (strain ATCC 25586 / DSM 15643 / BCRC 10681 / CIP 101130 / JCM 8532 / KCTC 2640 / LMG 13131 / VPI 4355), this protein is Large ribosomal subunit protein bL27.